The primary structure comprises 351 residues: uncharacterized protein (351 aa).

Residues Asp215, Asp226, His290, Glu319, and Glu333 each contribute to the Mn(2+) site.

The protein belongs to the peptidase M24B family. The cofactor is Mn(2+).

This is an uncharacterized protein from Staphylococcus aureus (strain MRSA252).